The following is a 147-amino-acid chain: Hemoglobin subunit delta (147 aa).

Val2 is subject to N-acetylalanine; in variant Niigata. Residues 3 to 147 (HLTPEEKTAV…VANALAHKYH (145 aa)) form the Globin domain. Ser51 carries the post-translational modification Phosphoserine. Heme b is bound by residues His64 and His93.

This sequence belongs to the globin family. Heterotetramer of two alpha chains and two delta chains in adult hemoglobin A2 (HbA2). HbA2 represents less than 3.5% of adult hemoglobin. As to expression, red blood cells.

Functionally, involved in oxygen transport from the lung to the various peripheral tissues. The sequence is that of Hemoglobin subunit delta (HBD) from Homo sapiens (Human).